The sequence spans 84 residues: Small ribosomal subunit protein bS20 (84 aa).

The interval 1–25 is disordered; the sequence is MANIVSNEKTYRHTQKVRKENHAKM.

The protein belongs to the bacterial ribosomal protein bS20 family.

Binds directly to 16S ribosomal RNA. This Ureaplasma urealyticum serovar 10 (strain ATCC 33699 / Western) protein is Small ribosomal subunit protein bS20.